The sequence spans 506 residues: Histidine ammonia-lyase (506 aa).

Residues 144-146 (ASG) constitute a cross-link (5-imidazolinone (Ala-Gly)). At Ser145 the chain carries 2,3-didehydroalanine (Ser).

Belongs to the PAL/histidase family. In terms of processing, contains an active site 4-methylidene-imidazol-5-one (MIO), which is formed autocatalytically by cyclization and dehydration of residues Ala-Ser-Gly.

It localises to the cytoplasm. It carries out the reaction L-histidine = trans-urocanate + NH4(+). It participates in amino-acid degradation; L-histidine degradation into L-glutamate; N-formimidoyl-L-glutamate from L-histidine: step 1/3. The sequence is that of Histidine ammonia-lyase from Legionella pneumophila subsp. pneumophila (strain Philadelphia 1 / ATCC 33152 / DSM 7513).